The chain runs to 200 residues: GTP cyclohydrolase-2 (200 aa).

52–56 is a GTP binding site; sequence RIHSE. Cys57, Cys68, and Cys70 together coordinate Zn(2+). GTP-binding positions include Gln73, 94–96, and Thr116; that span reads EGR. The active-site Proton acceptor is the Asp128. Arg130 serves as the catalytic Nucleophile. Residues Thr151 and Lys156 each contribute to the GTP site.

The protein belongs to the GTP cyclohydrolase II family. Zn(2+) serves as cofactor.

The enzyme catalyses GTP + 4 H2O = 2,5-diamino-6-hydroxy-4-(5-phosphoribosylamino)-pyrimidine + formate + 2 phosphate + 3 H(+). It participates in cofactor biosynthesis; riboflavin biosynthesis; 5-amino-6-(D-ribitylamino)uracil from GTP: step 1/4. Its function is as follows. Catalyzes the conversion of GTP to 2,5-diamino-6-ribosylamino-4(3H)-pyrimidinone 5'-phosphate (DARP), formate and pyrophosphate. The sequence is that of GTP cyclohydrolase-2 from Psychromonas ingrahamii (strain DSM 17664 / CCUG 51855 / 37).